A 299-amino-acid polypeptide reads, in one-letter code: Ribosomal RNA small subunit methyltransferase H (299 aa).

Residues 36 to 38, D55, D103, and Q110 contribute to the S-adenosyl-L-methionine site; that span reads GGH. Composition is skewed to basic and acidic residues over residues 268–282 and 289–299; these read KPVRPSEEEIRENPR and RAAERIEKGGD. Residues 268–299 form a disordered region; it reads KPVRPSEEEIRENPRARSGRLRAAERIEKGGD.

It belongs to the methyltransferase superfamily. RsmH family.

It is found in the cytoplasm. The enzyme catalyses cytidine(1402) in 16S rRNA + S-adenosyl-L-methionine = N(4)-methylcytidine(1402) in 16S rRNA + S-adenosyl-L-homocysteine + H(+). Functionally, specifically methylates the N4 position of cytidine in position 1402 (C1402) of 16S rRNA. The polypeptide is Ribosomal RNA small subunit methyltransferase H (Thermotoga sp. (strain RQ2)).